Here is a 222-residue protein sequence, read N- to C-terminus: Phosphoribosylformylglycinamidine synthase subunit PurQ (222 aa).

Positions 2-222 (KAAVITFPGS…RALLGGMALV (221 aa)) constitute a Glutamine amidotransferase type-1 domain. The active-site Nucleophile is Cys86. Active-site residues include His194 and Glu196.

Part of the FGAM synthase complex composed of 1 PurL, 1 PurQ and 2 PurS subunits.

Its subcellular location is the cytoplasm. The enzyme catalyses N(2)-formyl-N(1)-(5-phospho-beta-D-ribosyl)glycinamide + L-glutamine + ATP + H2O = 2-formamido-N(1)-(5-O-phospho-beta-D-ribosyl)acetamidine + L-glutamate + ADP + phosphate + H(+). The catalysed reaction is L-glutamine + H2O = L-glutamate + NH4(+). It functions in the pathway purine metabolism; IMP biosynthesis via de novo pathway; 5-amino-1-(5-phospho-D-ribosyl)imidazole from N(2)-formyl-N(1)-(5-phospho-D-ribosyl)glycinamide: step 1/2. Functionally, part of the phosphoribosylformylglycinamidine synthase complex involved in the purines biosynthetic pathway. Catalyzes the ATP-dependent conversion of formylglycinamide ribonucleotide (FGAR) and glutamine to yield formylglycinamidine ribonucleotide (FGAM) and glutamate. The FGAM synthase complex is composed of three subunits. PurQ produces an ammonia molecule by converting glutamine to glutamate. PurL transfers the ammonia molecule to FGAR to form FGAM in an ATP-dependent manner. PurS interacts with PurQ and PurL and is thought to assist in the transfer of the ammonia molecule from PurQ to PurL. The protein is Phosphoribosylformylglycinamidine synthase subunit PurQ of Cereibacter sphaeroides (strain ATCC 17023 / DSM 158 / JCM 6121 / CCUG 31486 / LMG 2827 / NBRC 12203 / NCIMB 8253 / ATH 2.4.1.) (Rhodobacter sphaeroides).